The chain runs to 596 residues: Aspartic proteinase MKC7 (596 aa).

Positions 1–22 (MKLSVLTFVVDALLVCSSIVDA) are cleaved as a signal peptide. The propeptide occupies 23-65 (GVTDFPSLPSNEVYVKMNFQKKYGSSFENALDDTKGRTRLMTR). Residues 81–468 (YSVELDIGTP…DLDNMEISMA (388 aa)) form the Peptidase A1 domain. Residue aspartate 99 is part of the active site. N-linked (GlcNAc...) asparagine glycosylation is found at asparagine 180, asparagine 190, asparagine 219, asparagine 229, asparagine 232, asparagine 286, and asparagine 346. Aspartate 360 is a catalytic residue. N-linked (GlcNAc...) asparagine glycosylation is found at asparagine 471 and asparagine 517. Residues 530 to 570 (ATSSSSSKGQKTQTSTTALSISKSTSSTSSTGMLSPTSSSS) are compositionally biased toward low complexity. Residues 530–578 (ATSSSSSKGQKTQTSTTALSISKSTSSTSSTGMLSPTSSSSTRKENGGH) form a disordered region. Asparagine 575 carries the GPI-anchor amidated asparagine lipid modification. A propeptide spans 576-596 (GGHNLNPPFFARFITAIFHHI) (removed in mature form).

This sequence belongs to the peptidase A1 family.

The protein resides in the cell membrane. The enzyme catalyses Hydrolyzes various precursor proteins with Arg or Lys in P1, and commonly Arg or Lys also in P2. The P3 amino acid is usually non-polar, but otherwise additional basic amino acids are favorable in both non-prime and prime positions.. Its function is as follows. Cleaves proteins C-terminally to the most C-terminal basic residue. Can process the alpha-mating factor precursor. Required for cell wall integrity. The sequence is that of Aspartic proteinase MKC7 (MKC7) from Saccharomyces cerevisiae (strain ATCC 204508 / S288c) (Baker's yeast).